The primary structure comprises 504 residues: Anaerobic nitric oxide reductase transcription regulator NorR (504 aa).

Asp57 is subject to 4-aspartylphosphate. Residues 187 to 416 form the Sigma-54 factor interaction domain; it reads MIGLSPGMTQ…LEHAIHRAVV (230 aa). ATP is bound by residues 215-222 and 278-287; these read GETGTGKE and ADNGTLFLDE. Residues 479 to 498 constitute a DNA-binding region (H-T-H motif); that stretch reads WAASARMLETDVANLHRLAK.

Its pathway is nitrogen metabolism; nitric oxide reduction. In terms of biological role, required for the expression of anaerobic nitric oxide (NO) reductase, acts as a transcriptional activator for at least the norVW operon. Activation also requires sigma-54. In Escherichia coli O7:K1 (strain IAI39 / ExPEC), this protein is Anaerobic nitric oxide reductase transcription regulator NorR.